The primary structure comprises 350 residues: Ornithine cyclodeaminase (350 aa).

2 residues coordinate L-ornithine: R45 and K69. Residues T84, R112, A139 to Q140, D161, T202, V225 to D228, K232, and S293 contribute to the NAD(+) site. L-ornithine is bound at residue R112. D228 serves as a coordination point for L-ornithine. The Proton donor/acceptor role is filled by D228. V294 serves as a coordination point for L-ornithine. Residue K331 participates in NAD(+) binding.

The protein belongs to the ornithine cyclodeaminase/mu-crystallin family. Homodimer. The cofactor is NAD(+).

It catalyses the reaction L-ornithine = L-proline + NH4(+). Its pathway is amino-acid biosynthesis; L-proline biosynthesis; L-proline from L-ornithine: step 1/1. Functionally, catalyzes the conversion of L-ornithine into L-proline with release of ammonia. Is likely involved in the L-ornithine degradation pathway that allows P.putida to utilize this compound as sole carbon and nitrogen source. This is Ornithine cyclodeaminase from Pseudomonas putida (strain ATCC 47054 / DSM 6125 / CFBP 8728 / NCIMB 11950 / KT2440).